The sequence spans 201 residues: 3-isopropylmalate dehydratase small subunit (201 aa).

The protein belongs to the LeuD family. LeuD type 1 subfamily. In terms of assembly, heterodimer of LeuC and LeuD.

The catalysed reaction is (2R,3S)-3-isopropylmalate = (2S)-2-isopropylmalate. The protein operates within amino-acid biosynthesis; L-leucine biosynthesis; L-leucine from 3-methyl-2-oxobutanoate: step 2/4. Its function is as follows. Catalyzes the isomerization between 2-isopropylmalate and 3-isopropylmalate, via the formation of 2-isopropylmaleate. This Shewanella oneidensis (strain ATCC 700550 / JCM 31522 / CIP 106686 / LMG 19005 / NCIMB 14063 / MR-1) protein is 3-isopropylmalate dehydratase small subunit.